We begin with the raw amino-acid sequence, 248 residues long: tRNA pseudouridine synthase A (248 aa).

Aspartate 53 acts as the Nucleophile in catalysis. Tyrosine 116 provides a ligand contact to substrate.

Belongs to the tRNA pseudouridine synthase TruA family. Homodimer.

It catalyses the reaction uridine(38/39/40) in tRNA = pseudouridine(38/39/40) in tRNA. Its function is as follows. Formation of pseudouridine at positions 38, 39 and 40 in the anticodon stem and loop of transfer RNAs. The polypeptide is tRNA pseudouridine synthase A (Helicobacter hepaticus (strain ATCC 51449 / 3B1)).